The primary structure comprises 102 residues: uncharacterized protein (102 aa).

A disordered region spans residues 1–43 (MNNAHEENISSVTGFKSTSGSPAIGSSLPGRSGEGRSSSSSSG). Polar residues predominate over residues 9–21 (ISSVTGFKSTSGS). The segment covering 25–43 (GSSLPGRSGEGRSSSSSSG) has biased composition (low complexity).

This is an uncharacterized protein from Saccharomyces cerevisiae (strain ATCC 204508 / S288c) (Baker's yeast).